The following is a 186-amino-acid chain: ATP synthase subunit b, chloroplastic (186 aa).

Residues isoleucine 27–leucine 43 traverse the membrane as a helical segment.

This sequence belongs to the ATPase B chain family. In terms of assembly, F-type ATPases have 2 components, F(1) - the catalytic core - and F(0) - the membrane proton channel. F(1) has five subunits: alpha(3), beta(3), gamma(1), delta(1), epsilon(1). F(0) has four main subunits: a(1), b(1), b'(1) and c(10-14). The alpha and beta chains form an alternating ring which encloses part of the gamma chain. F(1) is attached to F(0) by a central stalk formed by the gamma and epsilon chains, while a peripheral stalk is formed by the delta, b and b' chains.

It is found in the plastid. Its subcellular location is the chloroplast thylakoid membrane. Its function is as follows. F(1)F(0) ATP synthase produces ATP from ADP in the presence of a proton or sodium gradient. F-type ATPases consist of two structural domains, F(1) containing the extramembraneous catalytic core and F(0) containing the membrane proton channel, linked together by a central stalk and a peripheral stalk. During catalysis, ATP synthesis in the catalytic domain of F(1) is coupled via a rotary mechanism of the central stalk subunits to proton translocation. Component of the F(0) channel, it forms part of the peripheral stalk, linking F(1) to F(0). The chain is ATP synthase subunit b, chloroplastic from Mesostigma viride (Green alga).